Here is a 1354-residue protein sequence, read N- to C-terminus: Rho-associated protein kinase 1 (1354 aa).

Position 2 is an N-acetylserine (S2). The Protein kinase domain occupies 76-338; the sequence is YEVVKVIGRG…VEEIKRHLFF (263 aa). Residues 82–90 and K105 each bind ATP; that span reads IGRGAFGEV. The Proton acceptor role is filled by D198. In terms of domain architecture, AGC-kinase C-terminal spans 341 to 409; the sequence is DQWAWETLRD…YSNRRYLPSA (69 aa). The segment at 368-727 is interaction with FHOD1; the sequence is FDDLEEDKGD…KKLKEEREAR (360 aa). Positions 422–692 form a coiled coil; that stretch reads KSLQESLQKT…RLEQEVNEHK (271 aa). The REM-1 domain maps to 479–556; it reads SAVSQIEKEK…LEEANDLLRT (78 aa). The SHROOM3 binding stretch occupies residues 707–946; the sequence is EAKSVAMCEM…TVSRLEETNS (240 aa). Residues 949 to 1015 enclose the RhoBD domain; sequence TKDIEMLRKE…LAEIMNRKDF (67 aa). The segment at 998–1010 is RHOA binding; the sequence is LKTQAVNKLAEIM. Residues 1011-1102 are a coiled coil; it reads NRKDFKIDRK…KLLDLSDSTS (92 aa). S1105 and S1108 each carry phosphoserine. The auto-inhibitory stretch occupies residues 1115 to 1354; that stretch reads NLPESRIEGW…VVKNTSGKTS (240 aa). The 200-residue stretch at 1118–1317 folds into the PH domain; the sequence is ESRIEGWLSV…WVTHLVKKIP (200 aa). The segment at 1228-1283 adopts a Phorbol-ester/DAG-type zinc-finger fold; it reads GHEFIPTLYHFPANCEACAKPLWHVFKPPPALECRRCHVKCHRDHLDKKEDLISPC. S1328 is modified (phosphoserine). Residues 1333 to 1354 form a disordered region; the sequence is STRSTANQSFRKVVKNTSGKTS.

It belongs to the protein kinase superfamily. AGC Ser/Thr protein kinase family. As to quaternary structure, homodimer. Interacts with RHOA (activated by GTP), RHOB, RHOC, GEM, MYLC2B, RHOE, PPP1R12A, LIMK1, LIMK2, TSG101, CHORDC1, DAPK3, PFN1 and JIP3. Interacts with FHOD1 in a Src-dependent manner. Interacts with PTEN. Interacts with ITGB1BP1 (via N-terminus and PTB domain). Interacts with SHROOM3. The cofactor is Mg(2+). In terms of processing, autophosphorylated on serine and threonine residues. Post-translationally, cleaved by caspase-3 during apoptosis. This leads to constitutive activation of the kinase and membrane blebbing. As to expression, highly expressed in brain, heart, lung, liver, stomach, spleen, kidney, testis, muscle, embryo and placenta.

The protein resides in the cytoplasm. It is found in the cytoskeleton. The protein localises to the microtubule organizing center. It localises to the centrosome. Its subcellular location is the centriole. The protein resides in the golgi apparatus membrane. It is found in the cell projection. The protein localises to the bleb. It localises to the cell membrane. Its subcellular location is the lamellipodium. The protein resides in the ruffle. The catalysed reaction is L-seryl-[protein] + ATP = O-phospho-L-seryl-[protein] + ADP + H(+). It carries out the reaction L-threonyl-[protein] + ATP = O-phospho-L-threonyl-[protein] + ADP + H(+). Activated by RHOA binding. Inhibited by Y-27632. Its function is as follows. Protein kinase which is a key regulator of the actin cytoskeleton and cell polarity. Involved in regulation of smooth muscle contraction, actin cytoskeleton organization, stress fiber and focal adhesion formation, neurite retraction, cell adhesion and motility via phosphorylation of DAPK3, GFAP, LIMK1, LIMK2, MYL9/MLC2, TPPP, PFN1 and PPP1R12A. Phosphorylates FHOD1 and acts synergistically with it to promote SRC-dependent non-apoptotic plasma membrane blebbing. Phosphorylates JIP3 and regulates the recruitment of JNK to JIP3 upon UVB-induced stress. Acts as a suppressor of inflammatory cell migration by regulating PTEN phosphorylation and stability. Acts as a negative regulator of VEGF-induced angiogenic endothelial cell activation. Required for centrosome positioning and centrosome-dependent exit from mitosis. Plays a role in terminal erythroid differentiation. Inhibits podocyte motility via regulation of actin cytoskeletal dynamics and phosphorylation of CFL1. Promotes keratinocyte terminal differentiation. Involved in osteoblast compaction through the fibronectin fibrillogenesis cell-mediated matrix assembly process, essential for osteoblast mineralization. May regulate closure of the eyelids and ventral body wall by inducing the assembly of actomyosin bundles. In Mus musculus (Mouse), this protein is Rho-associated protein kinase 1 (Rock1).